We begin with the raw amino-acid sequence, 267 residues long: FCS-Like Zinc finger 8 (267 aa).

2 disordered regions span residues 1 to 29 (MLKKRSRSKQALMAETNQSQNQKQSKTTP) and 124 to 156 (DSPISSSDFGIKTRNSQPETKKPGSESGLGSPR). 2 stretches are compositionally biased toward polar residues: residues 15–28 (ETNQSQNQKQSKTT) and 126–141 (PISSSDFGIKTRNSQP). Residues 221–265 (SFLSCCCNCKKSLGPRDDIFMYRGDRAFCSSECRSIEMMMSEEND) form an FLZ-type zinc finger.

It belongs to the FLZ family. Interacts with KIN10 and KIN11 via its FLZ-type zinc finger domain. Interacts with KINB1, KINB2, KINB3 and SNF4 via its N-terminal part. Interacts with HB21/ZHD3.

Functionally, may act as an adapter to facilitate the interaction of SnRK1 complex with effector proteins, conferring tissue- and stimulus-type specific differences in the SnRK1 regulation pathway. The polypeptide is FCS-Like Zinc finger 8 (Arabidopsis thaliana (Mouse-ear cress)).